The following is a 361-amino-acid chain: MLVSDFHFNLPDELIARYPKDERTASRLLHLNGESGKFSDLHFSDLLDHINPGDLLIFNNTRVIPARLYGRKESGGKLEVLIERVLDEHHCLAHIRCSKAPKAGTKLILGEDKLGIGNGLEATMISRHDTLFELRFNATTPLFTLLQQAGHIPLPPYIDRPDEDFDQERYQTVYSKVLGAVAAPTAGLHFDNPMLDKLKAKGVNMAFVTLHVGAGTFQPVRVENILEHNMHAEYAEVTQAVVDQILATKAAGKRVIAVGTTSVRSIESAAQATQPTGKLIAPFFSDTNIFLYPGKTFKIVDVLITNFHLPESTLIMLVSAFAGYRHTMNAYQHAVQQKYRFFSYGDAMLINKNPNALNDLP.

Belongs to the QueA family. As to quaternary structure, monomer.

It is found in the cytoplasm. It catalyses the reaction 7-aminomethyl-7-carbaguanosine(34) in tRNA + S-adenosyl-L-methionine = epoxyqueuosine(34) in tRNA + adenine + L-methionine + 2 H(+). It participates in tRNA modification; tRNA-queuosine biosynthesis. In terms of biological role, transfers and isomerizes the ribose moiety from AdoMet to the 7-aminomethyl group of 7-deazaguanine (preQ1-tRNA) to give epoxyqueuosine (oQ-tRNA). In Haemophilus ducreyi (strain 35000HP / ATCC 700724), this protein is S-adenosylmethionine:tRNA ribosyltransferase-isomerase.